The primary structure comprises 195 residues: Large ribosomal subunit protein uL5 (195 aa).

The protein belongs to the universal ribosomal protein uL5 family. In terms of assembly, part of the 50S ribosomal subunit; part of the 5S rRNA/L5/L18/L25 subcomplex. Contacts the 5S rRNA and the P site tRNA. Forms a bridge to the 30S subunit in the 70S ribosome.

In terms of biological role, this is one of the proteins that bind and probably mediate the attachment of the 5S RNA into the large ribosomal subunit, where it forms part of the central protuberance. In the 70S ribosome it contacts protein S13 of the 30S subunit (bridge B1b), connecting the 2 subunits; this bridge is implicated in subunit movement. Contacts the P site tRNA; the 5S rRNA and some of its associated proteins might help stabilize positioning of ribosome-bound tRNAs. The polypeptide is Large ribosomal subunit protein uL5 (Chlorobium chlorochromatii (strain CaD3)).